The chain runs to 247 residues: Large ribosomal subunit protein uL24m (247 aa).

Residues 84–117 (FFRGDRIEVLVGKDKGKQGIVTQVIPERNWVIVE) form the KOW domain.

This sequence belongs to the universal ribosomal protein uL24 family. In terms of assembly, component of the mitochondrial ribosome large subunit (39S) which comprises a 16S rRNA and about 50 distinct proteins.

It is found in the mitochondrion. This is Large ribosomal subunit protein uL24m (mRpL24) from Drosophila pseudoobscura pseudoobscura (Fruit fly).